The primary structure comprises 416 residues: CapZ-interacting protein (416 aa).

Disordered stretches follow at residues M1–P84 and A98–M416. The span at T8 to V20 shows a compositional bias: polar residues. S17 carries the phosphoserine modification. A Phosphoserine; by MAPK8; in vitro modification is found at S68. At S82 the chain carries Phosphoserine. S83 is subject to Phosphoserine; by MAPK8; in vitro. S105 carries the phosphoserine modification. The residue at position 108 (S108) is a Phosphoserine; by MAPK12 and MAPK13. A phosphoserine mark is found at S116, S120, and S123. T124 bears the Phosphothreonine mark. Phosphoserine is present on residues S126, S127, S135, and S143. A compositionally biased stretch (basic residues) spans V159–R176. A Phosphoserine modification is found at S177. S179 is subject to Phosphoserine; by MAPKAPK2 and MAPKAPK3. S216 is modified (phosphoserine; by MAPK8; in vitro). The 104-residue stretch at G227–E330 folds into the RCSD domain. Position 244 is a phosphoserine; by MAPKAPK2 or MAPKAPK3; in vitro (S244). Residues S244 to G273 are compositionally biased toward basic and acidic residues. Phosphoserine is present on residues S267, S268, S284, S298, and S333. Residues A292–P349 show a composition bias toward basic and acidic residues. Phosphothreonine is present on T336. Position 351 is a phosphoserine (S351). Positions D360–Q372 are enriched in basic and acidic residues. The span at S382–Q397 shows a compositional bias: polar residues.

As to quaternary structure, interacts with CAPZA2 and CAPZB. Post-translationally, dephosphorylation results in its dissociation from CAPZA2. Highly expressed in skeletal muscle and more weakly in cardiac muscle. Also expressed in several lymphoid organs, including spleen, thymus, peripheral blood leukocytes, lymph node and bone marrow.

Its function is as follows. Stress-induced phosphorylation of CAPZIP may regulate the ability of F-actin-capping protein to remodel actin filament assembly. This chain is CapZ-interacting protein (RCSD1), found in Homo sapiens (Human).